We begin with the raw amino-acid sequence, 144 residues long: Leghemoglobin-1 (144 aa).

One can recognise a Globin domain in the interval 2 to 144; that stretch reads GFTEKQEALV…DGLATAIKAA (143 aa). 2 positions are modified to nitrated tyrosine: tyrosine 25 and tyrosine 30. Heme b is bound at residue serine 45. Position 45 is a phosphoserine (serine 45). Histidine 62 is an O2 binding site. Lysine 65, histidine 93, and lysine 96 together coordinate heme b. A Nitrated tyrosine modification is found at tyrosine 134.

This sequence belongs to the plant globin family. As to quaternary structure, monomer. In terms of processing, nitrated in effective nodules and particularly in hypoxic conditions; this mechanism may play a protective role in the symbiosis by buffering toxic peroxynitrite NO(2)(-). Nitration level decrease during nodule senescence. Post-translationally, phosphorylation at Ser-45 disrupts the molecular environment of its porphyrin ring oxygen binding pocket, thus leading to a reduced oxygen consumption and to the delivery of oxygen O(2) to symbiosomes. In terms of tissue distribution, root nodules.

Its subcellular location is the cytoplasm. It is found in the cytosol. It localises to the nucleus. Its function is as follows. Leghemoglobin that reversibly binds oxygen O(2) through a pentacoordinated heme iron. In root nodules, facilitates the diffusion of oxygen to the bacteroids while preventing the bacterial nitrogenase from being inactivated by buffering dioxygen, nitric oxide and carbon monoxide, and promoting the formation of reactive oxygen species (ROS, e.g. H(2)O(2)). This role is essential for symbiotic nitrogen fixation (SNF). This Vicia faba (Broad bean) protein is Leghemoglobin-1.